The following is a 56-amino-acid chain: Protein hunchback (56 aa).

C2H2-type zinc fingers lie at residues 1 to 5, 11 to 33, and 39 to 56; these read HVRNH, HKCG…MKSH, and YRCA…SLKL.

Belongs to the hunchback C2H2-type zinc-finger protein family.

The protein localises to the nucleus. Gap class segmentation protein that controls development of head structures. The protein is Protein hunchback (hb) of Bithynia tentaculata (Spire snail).